We begin with the raw amino-acid sequence, 692 residues long: Elongation factor G 2 (692 aa).

Residues 8–283 enclose the tr-type G domain; sequence KDVRNIGIMA…GVVNYLPSPL (276 aa). GTP is bound by residues 17 to 24, 81 to 85, and 135 to 138; these read AHIDAGKT, DTPGH, and NKMD.

The protein belongs to the TRAFAC class translation factor GTPase superfamily. Classic translation factor GTPase family. EF-G/EF-2 subfamily.

Its subcellular location is the cytoplasm. Functionally, catalyzes the GTP-dependent ribosomal translocation step during translation elongation. During this step, the ribosome changes from the pre-translocational (PRE) to the post-translocational (POST) state as the newly formed A-site-bound peptidyl-tRNA and P-site-bound deacylated tRNA move to the P and E sites, respectively. Catalyzes the coordinated movement of the two tRNA molecules, the mRNA and conformational changes in the ribosome. This chain is Elongation factor G 2, found in Desulfotalea psychrophila (strain LSv54 / DSM 12343).